We begin with the raw amino-acid sequence, 473 residues long: M-phase inducer phosphatase 3 (473 aa).

Positions 1 to 23 (MSTELFSSTREEGSSGSGPSFRS) are disordered. N-acetylserine is present on Ser-2. Phosphoserine is present on residues Ser-20 and Ser-38. Thr-48 bears the Phosphothreonine mark. Phosphoserine is present on residues Ser-57, Ser-61, and Ser-64. The residue at position 67 (Thr-67) is a Phosphothreonine. Ser-122 carries the phosphoserine; by CDK1 modification. At Ser-129 the chain carries Phosphoserine. The residue at position 130 (Thr-130) is a Phosphothreonine. The interval 132–158 (NGLDRGHRKRDAMCSSSANKENDNGNL) is disordered. The segment covering 145–158 (CSSSANKENDNGNL) has biased composition (polar residues). Residue Ser-168 is modified to Phosphoserine. 2 positions are modified to phosphoserine; by PLK3: Ser-191 and Ser-198. A Phosphoserine; by CDK1 modification is found at Ser-214. Ser-216 is subject to Phosphoserine; by CHEK1, CHEK2, BRSK1, MAPK14 AND MARK3. In terms of domain architecture, Rhodanese spans 321–428 (LIEKFYVIDC…FFPEYMELCE (108 aa)). The HIV-1 Vpr binding site stretch occupies residues 334–379 (YEYLGGHIQGALNLYSQEELFNFFLKKPIVPLDTQKRIIIVFHCEF). Cys-377 is a catalytic residue. At Ser-472 the chain carries Phosphoserine.

Belongs to the MPI phosphatase family. Interacts with MAPK14 and 14-3-3 proteins. When phosphorylated on Ser-129 and/or Thr-130, interacts with PLK1. Interacts with MARK3/C-TAK1. In terms of assembly, (Microbial infection) Interacts with HIV-1 Vpr; this interaction inactivates CDC25C phosphatase activity. Post-translationally, phosphorylated by CHEK1 and MAPK14 at Ser-216. This phosphorylation creates a binding site for 14-3-3 protein and inhibits the phosphatase. Phosphorylated by PLK4. Phosphorylated by PLK1, leading to activate the phosphatase activity. Phosphorylation by PLK3 at Ser-191 promotes nuclear translocation. Ser-198 is a minor phosphorylation site. Was initially reported to be phosphorylated by PLK3 at Ser-216. However, such phosphorylation by PLK3 was not confirmed by other groups. Phosphorylation at Thr-48, Thr-67, Ser-122, Thr-130, Ser-168 and Ser-214 occurs at G2 and G2-M transition and is probably catalyzed by CDK1. Ser-168 phosphorylation levels are lower than those at the other 5 CDK1 sites. Phosphorylation by CDK1 leads to increased activity.

Its subcellular location is the nucleus. The enzyme catalyses O-phospho-L-tyrosyl-[protein] + H2O = L-tyrosyl-[protein] + phosphate. Functions as a dosage-dependent inducer in mitotic control. Tyrosine protein phosphatase required for progression of the cell cycle. When phosphorylated, highly effective in activating G2 cells into prophase. Directly dephosphorylates CDK1 and activates its kinase activity. In Homo sapiens (Human), this protein is M-phase inducer phosphatase 3 (CDC25C).